A 235-amino-acid chain; its full sequence is RNA polymerase sigma factor SigI7 (235 aa).

A Polymerase core binding motif is present at residues D49–I62. The segment at residues V191–K210 is a DNA-binding region (H-T-H motif).

The protein belongs to the sigma-70 factor family. SigI subfamily. In terms of assembly, interacts with RsgI7.

It is found in the cytoplasm. Negatively regulated by the anti-sigma-I factor RsgI7. In terms of biological role, sigma factors are initiation factors that promote the attachment of RNA polymerase to specific initiation sites and are then released. The protein is RNA polymerase sigma factor SigI7 of Acetivibrio thermocellus (strain ATCC 27405 / DSM 1237 / JCM 9322 / NBRC 103400 / NCIMB 10682 / NRRL B-4536 / VPI 7372) (Clostridium thermocellum).